A 585-amino-acid chain; its full sequence is Arginine--tRNA ligase (585 aa).

The short motif at 131–141 (ANPTGPMHVGH) is the 'HIGH' region element.

It belongs to the class-I aminoacyl-tRNA synthetase family. Monomer.

The protein localises to the cytoplasm. The catalysed reaction is tRNA(Arg) + L-arginine + ATP = L-arginyl-tRNA(Arg) + AMP + diphosphate. The polypeptide is Arginine--tRNA ligase (Bartonella tribocorum (strain CIP 105476 / IBS 506)).